The primary structure comprises 572 residues: Laccase-3 (572 aa).

The N-terminal stretch at 1 to 18 (MARTTFLVSVSLFVSAVL) is a signal peptide. Plastocyanin-like domains are found at residues 21 to 145 (TVEY…LVIY) and 157 to 304 (IDDE…LIYE). 4 residues coordinate Cu cation: His82, His84, His127, and His129. A disulfide bridge connects residues Cys103 and Cys561. 5 N-linked (GlcNAc...) asparagine glycosylation sites follow: Asn182, Asn228, Asn294, Asn367, and Asn405. The 119-residue stretch at 422–540 (DMPTLLKILT…EGFAMVFAEA (119 aa)) folds into the Plastocyanin-like 3 domain. His470, His473, His475, His522, Cys523, His524, and His528 together coordinate Cu cation.

The protein belongs to the multicopper oxidase family. Homodimer. Requires Cu cation as cofactor. In mycelia, at a lower level than LCC4.

The protein localises to the secreted. The enzyme catalyses 4 hydroquinone + O2 = 4 benzosemiquinone + 2 H2O. Its function is as follows. Lignin degradation and detoxification of lignin-derived products. The protein is Laccase-3 (LCC3) of Thanatephorus cucumeris (Black scurf of potato).